We begin with the raw amino-acid sequence, 138 residues long: Ribosomal RNA large subunit methyltransferase H (138 aa).

Residues leucine 57, glycine 86, and 105 to 110 contribute to the S-adenosyl-L-methionine site; that span reads LSPLTF.

It belongs to the RNA methyltransferase RlmH family. Homodimer.

It is found in the cytoplasm. It catalyses the reaction pseudouridine(1915) in 23S rRNA + S-adenosyl-L-methionine = N(3)-methylpseudouridine(1915) in 23S rRNA + S-adenosyl-L-homocysteine + H(+). Specifically methylates the pseudouridine at position 1915 (m3Psi1915) in 23S rRNA. This is Ribosomal RNA large subunit methyltransferase H from Prochlorococcus marinus (strain MIT 9312).